We begin with the raw amino-acid sequence, 787 residues long: Signal transducer and activator of transcription 5B (787 aa).

Tyr-90 carries the post-translational modification Phosphotyrosine. Phosphoserine occurs at positions 128 and 193. Residues 232–321 are required for interaction with NMI; it reads KHQKTLQLLR…MLAEVNATIT (90 aa). In terms of domain architecture, SH2 spans 589-686; that stretch reads WNDGAILGFV…EVYSKYYTPV (98 aa). Tyr-682 carries the phosphotyrosine modification. Tyr-699 is subject to Phosphotyrosine; by HCK, JAK and PTK6.

This sequence belongs to the transcription factor STAT family. In terms of assembly, upon activation, forms homodimers. Forms also heterodimers with related family members. Binds NR3C1. Interacts with NCOA1. Interacts with NMI. Interacts with SOCS7. Interacts (via SH2 domain) with INSR. Interacts with CPEB3; this inhibits STAT5B-mediated transcriptional activation. In terms of processing, tyrosine phosphorylated in response to signaling via activated KIT, resulting in translocation to the nucleus. Tyrosine phosphorylated in response to signaling via activated FLT3; wild-type FLT3 results in much weaker phosphorylation than constitutively activated mutant FLT3. Alternatively, can be phosphorylated by JAK2. Phosphorylation at Tyr-699 by PTK6 or HCK leads to an increase of its transcriptional activity.

The protein resides in the cytoplasm. The protein localises to the nucleus. Functionally, carries out a dual function: signal transduction and activation of transcription. Mediates cellular responses to the cytokine KITLG/SCF and other growth factors. Binds to the GAS element and activates PRL-induced transcription. Positively regulates hematopoietic/erythroid differentiation. The chain is Signal transducer and activator of transcription 5B (STAT5B) from Homo sapiens (Human).